Here is a 932-residue protein sequence, read N- to C-terminus: Progesterone receptor (932 aa).

The interval 1–164 (MTELKAKGPR…PATQGVLSPL (164 aa)) is AF3; mediates transcriptional activation. The tract at residues 1–254 (MTELKAKGPR…GGAAAGGAAA (254 aa)) is disordered. The interval 1 to 565 (MTELKAKGPR…YSFESLPQKI (565 aa)) is modulating, Pro-Rich. Position 20 is a phosphoserine (Ser20). Positions 55 to 59 (LDGLL) match the LXXL motif 1 motif. Position 81 is a phosphoserine (Ser81). Low complexity predominate over residues 88–103 (SRAEATRGAGGSSSSP). The LXXL motif 2 motif lies at 115–119 (LDTLL). A phosphoserine mark is found at Ser130 and Ser162. A mediates transcriptional transrepression region spans residues 165 to 304 (MSRSGGKAGD…LATTVMDFIH (140 aa)). The Nuclear localization signal motif lies at 183 to 187 (KVLPQ). Ser190 and Ser213 each carry phosphoserine. Residues 220 to 231 (EVEEEDGSESED) show a composition bias toward acidic residues. The segment covering 232-254 (SAGPLLKGKPRALGGAAAGGAAA) has biased composition (low complexity). Ser293 carries the phosphoserine; by MAPK1 modification. The segment covering 334–349 (AASAFAPPRSSPSASS) has biased composition (low complexity). Residues 334–356 (AASAFAPPRSSPSASSTPVAVGD) are disordered. Ser344 carries the post-translational modification Phosphoserine; by MAPK. A Glycyl lysine isopeptide (Lys-Gly) (interchain with G-Cter in SUMO); alternate cross-link involves residue Lys387. Lys387 participates in a covalent cross-link: Glycyl lysine isopeptide (Lys-Gly) (interchain with G-Cter in ubiquitin); alternate. 2 disordered regions span residues 414–451 (PDFP…SSAS) and 468–499 (PPQQ…STAA). The span at 417 to 432 (PLGPPPPLPPRAPPSR) shows a compositional bias: pro residues. Positions 433–451 (PGEAAVTAAPASASVSSAS) are enriched in low complexity. An AF1; mediates transcriptional activation region spans residues 455–545 (STLECILYKA…VYPPYLNYLR (91 aa)). The span at 470 to 480 (QQGPFAPPPSK) shows a compositional bias: pro residues. Residue Lys530 forms a Glycyl lysine isopeptide (Lys-Gly) (interchain with G-Cter in SUMO) linkage. NR C4-type zinc fingers lie at residues 566 to 586 (CLIC…CGSC) and 602 to 626 (CAGR…LRKC). A DNA-binding region (nuclear receptor) is located at residues 566-638 (CLICGDEASG…AGMVLGGRKF (73 aa)). Ser675 carries the post-translational modification Phosphoserine. One can recognise an NR LBD domain in the interval 678 to 912 (QDIQLIPPLI…EFPEMMSEVI (235 aa)). Positions 686–932 (LINLLMSIEP…MVKPLLFHKK (247 aa)) are AF2; mediates transcriptional activation. Progesterone is bound at residue Arg765.

It belongs to the nuclear hormone receptor family. As to quaternary structure, interacts with SMARD1 and UNC45A. Interacts with CUEDC2; the interaction promotes ubiquitination, decreases sumoylation, and represses transcriptional activity. Interacts with PIAS3; the interaction promotes sumoylation of PR in a hormone-dependent manner, inhibits DNA-binding, and alters nuclear export. Interacts with SP1; the interaction requires ligand-induced phosphorylation on Ser-344 by ERK1/2-MAPK. Interacts with PRMT2. Interacts with NCOA2 and NCOA1. Interacts with KLF9. Interacts with GTF2B. In terms of processing, phosphorylated on multiple serine sites. Several of these sites are hormone-dependent. Phosphorylation on Ser-293 is highly hormone-dependent and modulates ubiquitination and sumoylation on Lys-387. Phosphorylation on Ser-102 and Ser-344 also requires induction by hormone. Basal phosphorylation on Ser-81, Ser-162 and Ser-190 is increased in response to progesterone and can be phosphorylated in vitro by the CDK2-A1 complex. Phosphorylation at Ser-162 and Ser-293, but not at Ser-190, is impaired during the G(2)/M phase of the cell cycle. Phosphorylation on Ser-344 by ERK1/2 MAPK is required for interaction with SP1. Post-translationally, sumoylation is hormone-dependent and represses transcriptional activity. Sumoylation on all three sites is enhanced by PIAS3. Desumoylated by SENP1. Sumoylation on Lys-387, the main site of sumoylation, is repressed by ubiquitination on the same site, and modulated by phosphorylation at Ser-293. Ubiquitination is hormone-dependent and represses sumoylation on the same site. Promoted by MAPK-mediated phosphorylation on Ser-293. Ubiquitinated by UBR5, leading to its degradation: UBR5 specifically recognizes and binds ligand-bound PGR when it is not associated with coactivators (NCOAs). In presence of NCOAs, the UBR5-degron is not accessible, preventing its ubiquitination and degradation. In terms of processing, palmitoylated by ZDHHC7 and ZDHHC21. Palmitoylation is required for plasma membrane targeting and for rapid intracellular signaling via ERK and AKT kinases and cAMP generation.

It localises to the nucleus. The protein localises to the cytoplasm. In terms of biological role, the steroid hormones and their receptors are involved in the regulation of eukaryotic gene expression and affect cellular proliferation and differentiation in target tissues. Transcriptional activator of several progesteron-dependent promoters in a variety of cell types. Involved in activation of SRC-dependent MAPK signaling on hormone stimulation. The chain is Progesterone receptor (PGR) from Hylobates lar (Lar gibbon).